Here is a 333-residue protein sequence, read N- to C-terminus: Acetyl-coenzyme A carboxylase carboxyl transferase subunit alpha (333 aa).

In terms of domain architecture, CoA carboxyltransferase C-terminal spans 48–308 (ALEVKVETLR…KEMLIEELRI (261 aa)).

Belongs to the AccA family. In terms of assembly, acetyl-CoA carboxylase is a heterohexamer composed of biotin carboxyl carrier protein (AccB), biotin carboxylase (AccC) and two subunits each of ACCase subunit alpha (AccA) and ACCase subunit beta (AccD).

Its subcellular location is the cytoplasm. The catalysed reaction is N(6)-carboxybiotinyl-L-lysyl-[protein] + acetyl-CoA = N(6)-biotinyl-L-lysyl-[protein] + malonyl-CoA. It participates in lipid metabolism; malonyl-CoA biosynthesis; malonyl-CoA from acetyl-CoA: step 1/1. In terms of biological role, component of the acetyl coenzyme A carboxylase (ACC) complex. First, biotin carboxylase catalyzes the carboxylation of biotin on its carrier protein (BCCP) and then the CO(2) group is transferred by the carboxyltransferase to acetyl-CoA to form malonyl-CoA. This chain is Acetyl-coenzyme A carboxylase carboxyl transferase subunit alpha, found in Chlorobium phaeobacteroides (strain DSM 266 / SMG 266 / 2430).